The following is a 477-amino-acid chain: Ribulose bisphosphate carboxylase large chain (477 aa).

A propeptide spanning residues 1–2 (MS) is cleaved from the precursor. N-acetylproline is present on Pro3. Lys14 is modified (N6,N6,N6-trimethyllysine). Substrate is bound by residues Asn123 and Thr173. The active-site Proton acceptor is Lys175. Substrate is bound at residue Lys177. Lys201, Asp203, and Glu204 together coordinate Mg(2+). Lys201 carries the N6-carboxylysine modification. His294 acts as the Proton acceptor in catalysis. Substrate contacts are provided by Arg295, His327, and Ser379.

The protein belongs to the RuBisCO large chain family. Type I subfamily. In terms of assembly, heterohexadecamer of 8 large chains and 8 small chains; disulfide-linked. The disulfide link is formed within the large subunit homodimers. Requires Mg(2+) as cofactor. Post-translationally, the disulfide bond which can form in the large chain dimeric partners within the hexadecamer appears to be associated with oxidative stress and protein turnover.

The protein resides in the plastid. It localises to the chloroplast. The enzyme catalyses 2 (2R)-3-phosphoglycerate + 2 H(+) = D-ribulose 1,5-bisphosphate + CO2 + H2O. It carries out the reaction D-ribulose 1,5-bisphosphate + O2 = 2-phosphoglycolate + (2R)-3-phosphoglycerate + 2 H(+). RuBisCO catalyzes two reactions: the carboxylation of D-ribulose 1,5-bisphosphate, the primary event in carbon dioxide fixation, as well as the oxidative fragmentation of the pentose substrate in the photorespiration process. Both reactions occur simultaneously and in competition at the same active site. The polypeptide is Ribulose bisphosphate carboxylase large chain (Nicotiana sylvestris (Wood tobacco)).